Consider the following 257-residue polypeptide: Phycoerythrobilin:ferredoxin oxidoreductase (257 aa).

The protein belongs to the HY2 family.

It carries out the reaction (3Z)-phycoerythrobilin + oxidized 2[4Fe-4S]-[ferredoxin] = 15,16-dihydrobiliverdin + reduced 2[4Fe-4S]-[ferredoxin] + 2 H(+). Its function is as follows. Catalyzes the two-electron reduction of the C2 and C3(1) diene system of 15,16-dihydrobiliverdin. The chain is Phycoerythrobilin:ferredoxin oxidoreductase from Prochlorococcus marinus (strain MIT 9211).